Consider the following 129-residue polypeptide: Large ribosomal subunit protein bL17 (129 aa).

This sequence belongs to the bacterial ribosomal protein bL17 family. As to quaternary structure, part of the 50S ribosomal subunit. Contacts protein L32.

This Desulfotalea psychrophila (strain LSv54 / DSM 12343) protein is Large ribosomal subunit protein bL17.